A 132-amino-acid chain; its full sequence is uncharacterized protein (132 aa).

This is an uncharacterized protein from Homo sapiens (Human).